The primary structure comprises 456 residues: Bifunctional protein GlmU (456 aa).

Residues 1–229 (MLNNAMSVVI…LSEVEGVNNR (229 aa)) are pyrophosphorylase. Residues 11 to 14 (LAAG), K25, Q76, 81 to 82 (GT), 103 to 105 (YGD), G140, E154, N169, and N227 each bind UDP-N-acetyl-alpha-D-glucosamine. D105 serves as a coordination point for Mg(2+). N227 provides a ligand contact to Mg(2+). The tract at residues 230–250 (LQLSRLERVYQSEQAEKLLLA) is linker. The N-acetyltransferase stretch occupies residues 251–456 (GVMLRDPARF…EGWRRPVKKK (206 aa)). Residues R333 and K351 each coordinate UDP-N-acetyl-alpha-D-glucosamine. H363 functions as the Proton acceptor in the catalytic mechanism. 2 residues coordinate UDP-N-acetyl-alpha-D-glucosamine: Y366 and N377. Acetyl-CoA contacts are provided by residues A380, 386–387 (NY), S405, A423, and R440.

It in the N-terminal section; belongs to the N-acetylglucosamine-1-phosphate uridyltransferase family. This sequence in the C-terminal section; belongs to the transferase hexapeptide repeat family. In terms of assembly, homotrimer. It depends on Mg(2+) as a cofactor.

It localises to the cytoplasm. It carries out the reaction alpha-D-glucosamine 1-phosphate + acetyl-CoA = N-acetyl-alpha-D-glucosamine 1-phosphate + CoA + H(+). The enzyme catalyses N-acetyl-alpha-D-glucosamine 1-phosphate + UTP + H(+) = UDP-N-acetyl-alpha-D-glucosamine + diphosphate. The protein operates within nucleotide-sugar biosynthesis; UDP-N-acetyl-alpha-D-glucosamine biosynthesis; N-acetyl-alpha-D-glucosamine 1-phosphate from alpha-D-glucosamine 6-phosphate (route II): step 2/2. It functions in the pathway nucleotide-sugar biosynthesis; UDP-N-acetyl-alpha-D-glucosamine biosynthesis; UDP-N-acetyl-alpha-D-glucosamine from N-acetyl-alpha-D-glucosamine 1-phosphate: step 1/1. It participates in bacterial outer membrane biogenesis; LPS lipid A biosynthesis. In terms of biological role, catalyzes the last two sequential reactions in the de novo biosynthetic pathway for UDP-N-acetylglucosamine (UDP-GlcNAc). The C-terminal domain catalyzes the transfer of acetyl group from acetyl coenzyme A to glucosamine-1-phosphate (GlcN-1-P) to produce N-acetylglucosamine-1-phosphate (GlcNAc-1-P), which is converted into UDP-GlcNAc by the transfer of uridine 5-monophosphate (from uridine 5-triphosphate), a reaction catalyzed by the N-terminal domain. This chain is Bifunctional protein GlmU, found in Shigella flexneri serotype 5b (strain 8401).